A 440-amino-acid polypeptide reads, in one-letter code: Xylose isomerase (440 aa).

Residues His101 and Asp104 contribute to the active site. Residues Glu232, Glu268, His271, Asp296, Asp307, Asp309, and Asp339 each contribute to the Mg(2+) site.

It belongs to the xylose isomerase family. Homotetramer. The cofactor is Mg(2+).

Its subcellular location is the cytoplasm. The enzyme catalyses alpha-D-xylose = alpha-D-xylulofuranose. The protein is Xylose isomerase of Cronobacter sakazakii (strain ATCC BAA-894) (Enterobacter sakazakii).